A 140-amino-acid polypeptide reads, in one-letter code: Nucleoside diphosphate kinase (140 aa).

Positions 11, 59, 87, 93, 104, and 114 each coordinate ATP. The active-site Pros-phosphohistidine intermediate is the H117.

It belongs to the NDK family. As to quaternary structure, homotetramer. Mg(2+) serves as cofactor.

It localises to the cytoplasm. The catalysed reaction is a 2'-deoxyribonucleoside 5'-diphosphate + ATP = a 2'-deoxyribonucleoside 5'-triphosphate + ADP. It carries out the reaction a ribonucleoside 5'-diphosphate + ATP = a ribonucleoside 5'-triphosphate + ADP. Major role in the synthesis of nucleoside triphosphates other than ATP. The ATP gamma phosphate is transferred to the NDP beta phosphate via a ping-pong mechanism, using a phosphorylated active-site intermediate. This chain is Nucleoside diphosphate kinase, found in Paracoccus denitrificans (strain Pd 1222).